Consider the following 122-residue polypeptide: Ribosome-binding factor A (122 aa).

Belongs to the RbfA family. As to quaternary structure, monomer. Binds 30S ribosomal subunits, but not 50S ribosomal subunits or 70S ribosomes.

The protein resides in the cytoplasm. One of several proteins that assist in the late maturation steps of the functional core of the 30S ribosomal subunit. Associates with free 30S ribosomal subunits (but not with 30S subunits that are part of 70S ribosomes or polysomes). Required for efficient processing of 16S rRNA. May interact with the 5'-terminal helix region of 16S rRNA. This chain is Ribosome-binding factor A, found in Polaromonas naphthalenivorans (strain CJ2).